Consider the following 398-residue polypeptide: 2-amino-3-ketobutyrate coenzyme A ligase (398 aa).

111-112 (CF) is a pyridoxal 5'-phosphate binding site. Residue histidine 136 participates in substrate binding. Pyridoxal 5'-phosphate contacts are provided by residues serine 185, 210 to 213 (DDSH), 241 to 244 (TLGK), and 274 to 275 (SN). N6-(pyridoxal phosphate)lysine is present on lysine 244. Arginine 368 provides a ligand contact to substrate.

Belongs to the class-II pyridoxal-phosphate-dependent aminotransferase family. In terms of assembly, homodimer. Pyridoxal 5'-phosphate serves as cofactor.

It carries out the reaction glycine + acetyl-CoA = (2S)-2-amino-3-oxobutanoate + CoA. It participates in amino-acid degradation; L-threonine degradation via oxydo-reductase pathway; glycine from L-threonine: step 2/2. Functionally, catalyzes the cleavage of 2-amino-3-ketobutyrate to glycine and acetyl-CoA. The polypeptide is 2-amino-3-ketobutyrate coenzyme A ligase (Salmonella typhimurium (strain LT2 / SGSC1412 / ATCC 700720)).